We begin with the raw amino-acid sequence, 346 residues long: D-fructose 1,6-bisphosphatase class 2/sedoheptulose 1,7-bisphosphatase (346 aa).

Residues Asp-33, Glu-57, Asp-97, and Glu-100 each coordinate Mn(2+). Substrate contacts are provided by residues 100 to 102 (EGT), Tyr-131, 176 to 178 (RDR), and 198 to 200 (DGD). Glu-225 is a Mn(2+) binding site.

This sequence belongs to the FBPase class 2 family. In terms of assembly, homotetramer. It depends on Mn(2+) as a cofactor.

The catalysed reaction is beta-D-fructose 1,6-bisphosphate + H2O = beta-D-fructose 6-phosphate + phosphate. It catalyses the reaction D-sedoheptulose 1,7-bisphosphate + H2O = D-sedoheptulose 7-phosphate + phosphate. The protein operates within carbohydrate biosynthesis; Calvin cycle. In terms of biological role, catalyzes the hydrolysis of fructose 1,6-bisphosphate (Fru 1,6-P2) and sedoheptulose 1,7-bisphosphate (Sed 1,7-P2) to fructose 6-phosphate and sedoheptulose 7-phosphate, respectively. In Gloeobacter violaceus (strain ATCC 29082 / PCC 7421), this protein is D-fructose 1,6-bisphosphatase class 2/sedoheptulose 1,7-bisphosphatase.